The chain runs to 657 residues: Threonine--tRNA ligase (657 aa).

A TGS domain is found at 7–70 (SQTQVTVTLP…SEDASIEIVT (64 aa)). The interval 253–555 (DHRKLGAELE…LIEHTGGNFP (303 aa)) is catalytic. Zn(2+) is bound by residues cysteine 351, histidine 402, and histidine 532.

This sequence belongs to the class-II aminoacyl-tRNA synthetase family. Homodimer. The cofactor is Zn(2+).

It is found in the cytoplasm. The enzyme catalyses tRNA(Thr) + L-threonine + ATP = L-threonyl-tRNA(Thr) + AMP + diphosphate + H(+). Functionally, catalyzes the attachment of threonine to tRNA(Thr) in a two-step reaction: L-threonine is first activated by ATP to form Thr-AMP and then transferred to the acceptor end of tRNA(Thr). Also edits incorrectly charged L-seryl-tRNA(Thr). The protein is Threonine--tRNA ligase of Prosthecochloris aestuarii (strain DSM 271 / SK 413).